Consider the following 211-residue polypeptide: Adenylate kinase (211 aa).

10–15 (GSGKGT) lines the ATP pocket. Positions 30 to 59 (STGDMLRAEVSKKSPLGLKAEEYMKQGLLV) are NMP. AMP-binding positions include threonine 31, arginine 36, 57–59 (LLV), 84–87 (GFPR), and glutamine 91. Residues 125–162 (GRRVCPKCGATYNIYYQKPKNDTLCDNDATPLIQRDDD) form an LID region. Residue arginine 126 participates in ATP binding. Cysteine 129 and cysteine 132 together coordinate Zn(2+). 135–136 (TY) contacts ATP. Zn(2+) contacts are provided by cysteine 149 and aspartate 152. The AMP site is built by arginine 159 and arginine 170. Glycine 198 is a binding site for ATP.

It belongs to the adenylate kinase family. Monomer.

It localises to the cytoplasm. It catalyses the reaction AMP + ATP = 2 ADP. Its pathway is purine metabolism; AMP biosynthesis via salvage pathway; AMP from ADP: step 1/1. Its function is as follows. Catalyzes the reversible transfer of the terminal phosphate group between ATP and AMP. Plays an important role in cellular energy homeostasis and in adenine nucleotide metabolism. This Hydrogenobaculum sp. (strain Y04AAS1) protein is Adenylate kinase.